A 324-amino-acid polypeptide reads, in one-letter code: tRNA-dihydrouridine(20a/20b) synthase [NAD(P)+]-like (324 aa).

FMN contacts are provided by residues 33 to 35 (PMV) and glutamine 87. Cysteine 116 serves as the catalytic Proton donor. FMN contacts are provided by residues lysine 158, histidine 186, 216–218 (NGD), and 240–241 (AR).

This sequence belongs to the Dus family. Dus4 subfamily. It depends on FMN as a cofactor.

The catalysed reaction is 5,6-dihydrouridine(20a) in tRNA + NADP(+) = uridine(20a) in tRNA + NADPH + H(+). It carries out the reaction 5,6-dihydrouridine(20a) in tRNA + NAD(+) = uridine(20a) in tRNA + NADH + H(+). The enzyme catalyses 5,6-dihydrouridine(20b) in tRNA + NAD(+) = uridine(20b) in tRNA + NADH + H(+). It catalyses the reaction 5,6-dihydrouridine(20b) in tRNA + NADP(+) = uridine(20b) in tRNA + NADPH + H(+). Functionally, catalyzes the synthesis of dihydrouridine, a modified base found in the D-loop of most tRNAs. The sequence is that of tRNA-dihydrouridine(20a/20b) synthase [NAD(P)+]-like (Dus4l) from Mus musculus (Mouse).